A 509-amino-acid polypeptide reads, in one-letter code: Ankyrin repeat domain-containing protein 13C (509 aa).

Residues 1–19 (MTGEKIRSLHRDQKPSKDE) show a composition bias toward basic and acidic residues. The disordered stretch occupies residues 1-42 (MTGEKIRSLHRDQKPSKDEDLLEPDEEATAGGTFTRTGKLKN). 3 ANK repeats span residues 79 to 110 (DAYF…QKDN), 111 to 140 (HGNT…PVKV), and 144 to 173 (QGWS…QQSR).

Its subcellular location is the endoplasmic reticulum membrane. Its function is as follows. Acts as a molecular chaperone for G protein-coupled receptors, regulating their biogenesis and exit from the ER. The sequence is that of Ankyrin repeat domain-containing protein 13C (ankrd13c) from Xenopus tropicalis (Western clawed frog).